Consider the following 432-residue polypeptide: Lysosomal acid phosphatase (432 aa).

A signal peptide spans 1-32; sequence MADGSCLGSGPQLGLIALLVVLLFSAVPLAQS. Over 33–384 the chain is Lumenal; that stretch reads RELRFVTLVY…TTSFIMTEET (352 aa). His-44 acts as the Nucleophile in catalysis. 5 N-linked (GlcNAc...) asparagine glycosylation sites follow: Asn-94, Asn-135, Asn-179, Asn-193, and Asn-269. 3 disulfides stabilise this stretch: Cys-161–Cys-373, Cys-214–Cys-313, and Cys-348–Cys-352. Catalysis depends on Asp-290, which acts as the Proton donor. N-linked (GlcNAc...) asparagine glycosylation is found at Asn-325 and Asn-334. A helical membrane pass occupies residues 385–405; the sequence is IIGLTIGAIALFIIIVVLMLL. The Cytoplasmic segment spans residues 406 to 432; the sequence is SCNEPKDDGYQHVSDEGDDHETKGLAM.

This sequence belongs to the histidine acid phosphatase family. Post-translationally, the membrane-bound form is converted to the soluble form by sequential proteolytic processing. First, the C-terminal cytoplasmic tail is removed. Cleavage by a lysosomal protease releases the soluble form in the lysosome lumen.

Its subcellular location is the lysosome membrane. It is found in the lysosome lumen. The enzyme catalyses a phosphate monoester + H2O = an alcohol + phosphate. This chain is Lysosomal acid phosphatase (acp2), found in Xenopus laevis (African clawed frog).